A 405-amino-acid chain; its full sequence is L-rhamnonate dehydratase (405 aa).

Substrate is bound by residues histidine 33 and arginine 59. Positions 226, 252, and 280 each coordinate Mg(2+). Catalysis depends on histidine 329, which acts as the Proton acceptor. Residue glutamate 349 participates in substrate binding.

The protein belongs to the mandelate racemase/muconate lactonizing enzyme family. RhamD subfamily. As to quaternary structure, homooctamer; tetramer of dimers. Mg(2+) serves as cofactor.

It catalyses the reaction L-rhamnonate = 2-dehydro-3-deoxy-L-rhamnonate + H2O. Functionally, catalyzes the dehydration of L-rhamnonate to 2-keto-3-deoxy-L-rhamnonate (KDR). This is L-rhamnonate dehydratase from Escherichia coli (strain SMS-3-5 / SECEC).